The primary structure comprises 80 residues: MPFRFGTQPRRFPVEGGDSSIELESGLSSSASCTGKETSPNRQLRRCPGSHCLTITDVPITVYATMRKPPAQSSKEMHPK.

The tract at residues 1–45 (MPFRFGTQPRRFPVEGGDSSIELESGLSSSASCTGKETSPNRQLR) is disordered. Residues 15–32 (EGGDSSIELESGLSSSAS) show a composition bias toward low complexity. Residues 33-42 (CTGKETSPNR) show a composition bias toward polar residues.

Belongs to the FAM229 family.

The protein is Protein FAM229B (Fam229b) of Mus musculus (Mouse).